A 215-amino-acid polypeptide reads, in one-letter code: LexA repressor (215 aa).

Residues Arg-28–Arg-48 constitute a DNA-binding region (H-T-H motif). Catalysis depends on for autocatalytic cleavage activity residues Ser-133 and Lys-170.

Belongs to the peptidase S24 family. In terms of assembly, homodimer.

The catalysed reaction is Hydrolysis of Ala-|-Gly bond in repressor LexA.. Its function is as follows. Represses a number of genes involved in the response to DNA damage (SOS response), including recA and lexA. In the presence of single-stranded DNA, RecA interacts with LexA causing an autocatalytic cleavage which disrupts the DNA-binding part of LexA, leading to derepression of the SOS regulon and eventually DNA repair. The chain is LexA repressor from Burkholderia mallei (strain NCTC 10247).